We begin with the raw amino-acid sequence, 137 residues long: Phosphoribosyl-AMP cyclohydrolase (137 aa).

A Mg(2+)-binding site is contributed by Asp-84. Cys-85 contacts Zn(2+). Asp-86 and Asp-88 together coordinate Mg(2+). Zn(2+) is bound by residues Cys-101 and Cys-108.

It belongs to the PRA-CH family. In terms of assembly, homodimer. Requires Mg(2+) as cofactor. It depends on Zn(2+) as a cofactor.

The protein resides in the cytoplasm. The enzyme catalyses 1-(5-phospho-beta-D-ribosyl)-5'-AMP + H2O = 1-(5-phospho-beta-D-ribosyl)-5-[(5-phospho-beta-D-ribosylamino)methylideneamino]imidazole-4-carboxamide. Its pathway is amino-acid biosynthesis; L-histidine biosynthesis; L-histidine from 5-phospho-alpha-D-ribose 1-diphosphate: step 3/9. Functionally, catalyzes the hydrolysis of the adenine ring of phosphoribosyl-AMP. This Chlorobium phaeobacteroides (strain DSM 266 / SMG 266 / 2430) protein is Phosphoribosyl-AMP cyclohydrolase.